The chain runs to 391 residues: 4-hydroxy-3-methylbut-2-en-1-yl diphosphate synthase (flavodoxin) (391 aa).

[4Fe-4S] cluster contacts are provided by C286, C289, C321, and E328.

Belongs to the IspG family. The cofactor is [4Fe-4S] cluster.

It catalyses the reaction (2E)-4-hydroxy-3-methylbut-2-enyl diphosphate + oxidized [flavodoxin] + H2O + 2 H(+) = 2-C-methyl-D-erythritol 2,4-cyclic diphosphate + reduced [flavodoxin]. It participates in isoprenoid biosynthesis; isopentenyl diphosphate biosynthesis via DXP pathway; isopentenyl diphosphate from 1-deoxy-D-xylulose 5-phosphate: step 5/6. In terms of biological role, converts 2C-methyl-D-erythritol 2,4-cyclodiphosphate (ME-2,4cPP) into 1-hydroxy-2-methyl-2-(E)-butenyl 4-diphosphate. The sequence is that of 4-hydroxy-3-methylbut-2-en-1-yl diphosphate synthase (flavodoxin) from Corynebacterium diphtheriae (strain ATCC 700971 / NCTC 13129 / Biotype gravis).